The chain runs to 468 residues: 3-isopropylmalate dehydratase large subunit (468 aa).

[4Fe-4S] cluster is bound by residues Cys-347, Cys-407, and Cys-410. Residues 424 to 441 (SASSSNRNFKGRQGSPSG) show a composition bias toward polar residues. The segment at 424 to 443 (SASSSNRNFKGRQGSPSGRT) is disordered.

The protein belongs to the aconitase/IPM isomerase family. LeuC type 1 subfamily. As to quaternary structure, heterodimer of LeuC and LeuD. It depends on [4Fe-4S] cluster as a cofactor.

It catalyses the reaction (2R,3S)-3-isopropylmalate = (2S)-2-isopropylmalate. It functions in the pathway amino-acid biosynthesis; L-leucine biosynthesis; L-leucine from 3-methyl-2-oxobutanoate: step 2/4. Catalyzes the isomerization between 2-isopropylmalate and 3-isopropylmalate, via the formation of 2-isopropylmaleate. In Prochlorococcus marinus (strain MIT 9215), this protein is 3-isopropylmalate dehydratase large subunit.